Reading from the N-terminus, the 224-residue chain is Probable mitochondrial import inner membrane translocase subunit Tim17 4 (224 aa).

A run of 3 helical transmembrane segments spans residues 16–36, 60–80, and 115–135; these read CGCAFMMGTMGGSLFQYLKGF, AIAGSFAIWGATFSTVDCVMV, and AFVGCLVLAMLEGAGAAVATI.

The protein belongs to the Tim17/Tim22/Tim23 family. In terms of assembly, component of the TIM23 complex at least composed of Tim23, Tim17 (Tim17a1, Tim17a2 or Tim17b1) and a Tim50. The complex interacts with the Tim44 component of the PAM complex.

It is found in the mitochondrion inner membrane. Functionally, essential component of the TIM23 complex, a complex that mediates the translocation of transit peptide-containing proteins across the mitochondrial inner membrane. The sequence is that of Probable mitochondrial import inner membrane translocase subunit Tim17 4 (Tim17a2) from Drosophila melanogaster (Fruit fly).